The chain runs to 48 residues: SPbeta prophage-derived uncharacterized protein YotE (48 aa).

The polypeptide is SPbeta prophage-derived uncharacterized protein YotE (yotE) (Bacillus subtilis (strain 168)).